We begin with the raw amino-acid sequence, 303 residues long: Putative CRISPR-associated endonuclease Cas1 2 (303 aa).

Residue Glu-149 coordinates Mn(2+).

It belongs to the CRISPR-associated endonuclease Cas1 family. As to quaternary structure, homodimer, forms a heterotetramer with a Cas2 homodimer. The cofactor is Mg(2+). Requires Mn(2+) as cofactor.

CRISPR (clustered regularly interspaced short palindromic repeat), is an adaptive immune system that provides protection against mobile genetic elements (viruses, transposable elements and conjugative plasmids). CRISPR clusters contain sequences complementary to antecedent mobile elements and target invading nucleic acids. CRISPR clusters are transcribed and processed into CRISPR RNA (crRNA). Acts as a dsDNA endonuclease. Involved in the integration of spacer DNA into the CRISPR cassette. The sequence is that of Putative CRISPR-associated endonuclease Cas1 2 from Methanospirillum hungatei JF-1 (strain ATCC 27890 / DSM 864 / NBRC 100397 / JF-1).